Consider the following 127-residue polypeptide: Small ribosomal subunit protein uS11 (127 aa).

It belongs to the universal ribosomal protein uS11 family. In terms of assembly, part of the 30S ribosomal subunit. Interacts with proteins S7 and S18. Binds to IF-3.

Functionally, located on the platform of the 30S subunit, it bridges several disparate RNA helices of the 16S rRNA. Forms part of the Shine-Dalgarno cleft in the 70S ribosome. The chain is Small ribosomal subunit protein uS11 from Rickettsia bellii (strain RML369-C).